A 270-amino-acid polypeptide reads, in one-letter code: 3-methyl-2-oxobutanoate hydroxymethyltransferase (270 aa).

Mg(2+) contacts are provided by Asp-43 and Asp-82. 3-methyl-2-oxobutanoate is bound by residues 43–44 (DS), Asp-82, and Lys-112. Residue Glu-114 participates in Mg(2+) binding. The Proton acceptor role is filled by Glu-179.

It belongs to the PanB family. As to quaternary structure, homodecamer; pentamer of dimers. Requires Mg(2+) as cofactor.

Its subcellular location is the cytoplasm. The catalysed reaction is 3-methyl-2-oxobutanoate + (6R)-5,10-methylene-5,6,7,8-tetrahydrofolate + H2O = 2-dehydropantoate + (6S)-5,6,7,8-tetrahydrofolate. Its pathway is cofactor biosynthesis; (R)-pantothenate biosynthesis; (R)-pantoate from 3-methyl-2-oxobutanoate: step 1/2. Its function is as follows. Catalyzes the reversible reaction in which hydroxymethyl group from 5,10-methylenetetrahydrofolate is transferred onto alpha-ketoisovalerate to form ketopantoate. In Staphylococcus saprophyticus subsp. saprophyticus (strain ATCC 15305 / DSM 20229 / NCIMB 8711 / NCTC 7292 / S-41), this protein is 3-methyl-2-oxobutanoate hydroxymethyltransferase.